We begin with the raw amino-acid sequence, 202 residues long: Holliday junction branch migration complex subunit RuvA (202 aa).

The domain I stretch occupies residues Met-1–Thr-63. The tract at residues Ser-64–Leu-142 is domain II. Positions Ser-143 to Ala-148 are flexible linker. Positions Ala-149 to Lys-202 are domain III.

The protein belongs to the RuvA family. Homotetramer. Forms an RuvA(8)-RuvB(12)-Holliday junction (HJ) complex. HJ DNA is sandwiched between 2 RuvA tetramers; dsDNA enters through RuvA and exits via RuvB. An RuvB hexamer assembles on each DNA strand where it exits the tetramer. Each RuvB hexamer is contacted by two RuvA subunits (via domain III) on 2 adjacent RuvB subunits; this complex drives branch migration. In the full resolvosome a probable DNA-RuvA(4)-RuvB(12)-RuvC(2) complex forms which resolves the HJ.

The protein localises to the cytoplasm. Functionally, the RuvA-RuvB-RuvC complex processes Holliday junction (HJ) DNA during genetic recombination and DNA repair, while the RuvA-RuvB complex plays an important role in the rescue of blocked DNA replication forks via replication fork reversal (RFR). RuvA specifically binds to HJ cruciform DNA, conferring on it an open structure. The RuvB hexamer acts as an ATP-dependent pump, pulling dsDNA into and through the RuvAB complex. HJ branch migration allows RuvC to scan DNA until it finds its consensus sequence, where it cleaves and resolves the cruciform DNA. The chain is Holliday junction branch migration complex subunit RuvA from Corynebacterium aurimucosum (strain ATCC 700975 / DSM 44827 / CIP 107346 / CN-1) (Corynebacterium nigricans).